Here is a 195-residue protein sequence, read N- to C-terminus: Imidazoleglycerol-phosphate dehydratase (195 aa).

This sequence belongs to the imidazoleglycerol-phosphate dehydratase family.

It localises to the cytoplasm. It catalyses the reaction D-erythro-1-(imidazol-4-yl)glycerol 3-phosphate = 3-(imidazol-4-yl)-2-oxopropyl phosphate + H2O. It participates in amino-acid biosynthesis; L-histidine biosynthesis; L-histidine from 5-phospho-alpha-D-ribose 1-diphosphate: step 6/9. This is Imidazoleglycerol-phosphate dehydratase from Aromatoleum aromaticum (strain DSM 19018 / LMG 30748 / EbN1) (Azoarcus sp. (strain EbN1)).